Consider the following 356-residue polypeptide: C-X-C chemokine receptor type 2 (356 aa).

Topologically, residues 1 to 46 (MEYINWDNYSLEDLFGDIDNYTYNTEMPIIPADSAPCRPESLDINK) are extracellular. Residues N8 and N20 are each glycosylated (N-linked (GlcNAc...) asparagine). The chain crosses the membrane as a helical span at residues 47-73 (YAVVVIYVLVFVLNLLGNSLVIMVVLY). Residues 74 to 82 (SRVSHSVTD) are Cytoplasmic-facing. A helical transmembrane segment spans residues 83-103 (VYLLNLAIADLLFALTLPIWA). At 104–118 (VSKVKGWIFGTPLCK) the chain is on the extracellular side. A disulfide bridge connects residues C117 and C194. The chain crosses the membrane as a helical span at residues 119 to 140 (IVSLLKEVNFYSGILLLASISM). The Cytoplasmic segment spans residues 141–161 (DRYLAIVHATRRLTQKKHWVK). Residues 162 to 181 (FICLGIWALSLILSLPIFVF) form a helical membrane-spanning segment. The Extracellular segment spans residues 182-206 (RRAINPPYSSPVCYEDMGTNTTKLR). The chain crosses the membrane as a helical span at residues 207 to 229 (IVMRALPQTFGFIVPLMIMLFCY). The Cytoplasmic portion of the chain corresponds to 230–249 (GLTLRTLFEAHMGQKHRAMR). A helical transmembrane segment spans residues 250-269 (VIFAVVLVFLLCWLPYNLVA). Residues 270-290 (DTLMRLQAIEETCQRRNDIGR) lie on the Extracellular side of the membrane. Residues 291–311 (ALDATEILGFFHSCLNPLIYA) form a helical membrane-spanning segment. Topologically, residues 312-356 (FIGQKFRHGLLKIMAFHGLISKEYLPKDSRPSFVGSSSANTSTTF) are cytoplasmic.

The protein belongs to the G-protein coupled receptor 1 family. As to quaternary structure, interacts with IL8. Interacts with GNAI2. In terms of processing, phosphorylated upon ligand binding; which is required for desensitization.

It localises to the cell membrane. In terms of biological role, receptor for interleukin-8 which is a powerful neutrophil chemotactic factor. Binding of IL-8 to the receptor causes activation of neutrophils. This response is mediated via a G-protein that activates a phosphatidylinositol-calcium second messenger system. Binds to IL-8 with high affinity. Also binds with high affinity to CXCL3, GRO/MGSA and NAP-2. The sequence is that of C-X-C chemokine receptor type 2 (CXCR2) from Canis lupus familiaris (Dog).